We begin with the raw amino-acid sequence, 179 residues long: NAD(P)H-quinone oxidoreductase subunit I, chloroplastic (179 aa).

2 4Fe-4S ferredoxin-type domains span residues 55 to 84 (GRIH…VDWR) and 95 to 124 (LNYS…MTEE). Positions 64, 67, 70, 74, 104, 107, 110, and 114 each coordinate [4Fe-4S] cluster.

The protein belongs to the complex I 23 kDa subunit family. NDH is composed of at least 16 different subunits, 5 of which are encoded in the nucleus. [4Fe-4S] cluster is required as a cofactor.

The protein localises to the plastid. Its subcellular location is the chloroplast thylakoid membrane. It carries out the reaction a plastoquinone + NADH + (n+1) H(+)(in) = a plastoquinol + NAD(+) + n H(+)(out). The catalysed reaction is a plastoquinone + NADPH + (n+1) H(+)(in) = a plastoquinol + NADP(+) + n H(+)(out). In terms of biological role, NDH shuttles electrons from NAD(P)H:plastoquinone, via FMN and iron-sulfur (Fe-S) centers, to quinones in the photosynthetic chain and possibly in a chloroplast respiratory chain. The immediate electron acceptor for the enzyme in this species is believed to be plastoquinone. Couples the redox reaction to proton translocation, and thus conserves the redox energy in a proton gradient. The chain is NAD(P)H-quinone oxidoreductase subunit I, chloroplastic from Nuphar advena (Common spatterdock).